The chain runs to 406 residues: Tyrosine--tRNA ligase (406 aa).

L-tyrosine is bound at residue tyrosine 35. The short motif at 40–49 (PTADSLHVGH) is the 'HIGH' region element. Residues tyrosine 168 and glutamine 172 each coordinate L-tyrosine. The 'KMSKS' region motif lies at 228-232 (KMGKT). Lysine 231 contributes to the ATP binding site. Positions 340-404 (LPILDVMAST…RGKKNYNKIE (65 aa)) constitute an S4 RNA-binding domain.

It belongs to the class-I aminoacyl-tRNA synthetase family. TyrS type 1 subfamily. As to quaternary structure, homodimer.

The protein resides in the cytoplasm. It carries out the reaction tRNA(Tyr) + L-tyrosine + ATP = L-tyrosyl-tRNA(Tyr) + AMP + diphosphate + H(+). Catalyzes the attachment of tyrosine to tRNA(Tyr) in a two-step reaction: tyrosine is first activated by ATP to form Tyr-AMP and then transferred to the acceptor end of tRNA(Tyr). The protein is Tyrosine--tRNA ligase of Clostridium beijerinckii (strain ATCC 51743 / NCIMB 8052) (Clostridium acetobutylicum).